Reading from the N-terminus, the 151-residue chain is Methylated-DNA--protein-cysteine methyltransferase (151 aa).

Cys-119 serves as the catalytic Nucleophile; methyl group acceptor.

Belongs to the MGMT family.

The protein resides in the cytoplasm. The enzyme catalyses a 6-O-methyl-2'-deoxyguanosine in DNA + L-cysteinyl-[protein] = S-methyl-L-cysteinyl-[protein] + a 2'-deoxyguanosine in DNA. It carries out the reaction a 4-O-methyl-thymidine in DNA + L-cysteinyl-[protein] = a thymidine in DNA + S-methyl-L-cysteinyl-[protein]. Its function is as follows. Involved in the cellular defense against the biological effects of O6-methylguanine (O6-MeG) and O4-methylthymine (O4-MeT) in DNA. Repairs the methylated nucleobase in DNA by stoichiometrically transferring the methyl group to a cysteine residue in the enzyme. This is a suicide reaction: the enzyme is irreversibly inactivated. This chain is Methylated-DNA--protein-cysteine methyltransferase, found in Saccharolobus islandicus (strain Y.N.15.51 / Yellowstone #2) (Sulfolobus islandicus).